We begin with the raw amino-acid sequence, 406 residues long: Cysteine desulfurase (406 aa).

K226 carries the post-translational modification N6-(pyridoxal phosphate)lysine. The Cysteine persulfide intermediate role is filled by C364.

This sequence belongs to the class-V pyridoxal-phosphate-dependent aminotransferase family. Csd subfamily. In terms of assembly, homodimer. Interacts with SufE and the SufBCD complex composed of SufB, SufC and SufD. The interaction with SufE is required to mediate the direct transfer of the sulfur atom from the S-sulfanylcysteine. The cofactor is pyridoxal 5'-phosphate.

The protein localises to the cytoplasm. It carries out the reaction (sulfur carrier)-H + L-cysteine = (sulfur carrier)-SH + L-alanine. The enzyme catalyses L-selenocysteine + AH2 = hydrogenselenide + L-alanine + A + H(+). Its pathway is cofactor biosynthesis; iron-sulfur cluster biosynthesis. Its function is as follows. Cysteine desulfurases mobilize the sulfur from L-cysteine to yield L-alanine, an essential step in sulfur metabolism for biosynthesis of a variety of sulfur-containing biomolecules. Component of the suf operon, which is activated and required under specific conditions such as oxidative stress and iron limitation. Acts as a potent selenocysteine lyase in vitro, that mobilizes selenium from L-selenocysteine. Selenocysteine lyase activity is however unsure in vivo. The protein is Cysteine desulfurase of Klebsiella pneumoniae subsp. pneumoniae (strain ATCC 700721 / MGH 78578).